The primary structure comprises 132 residues: Ribosome-binding factor A (132 aa).

A disordered region spans residues 113–132 (EANSTRAKDDDEADAPAKDD).

It belongs to the RbfA family. As to quaternary structure, monomer. Binds 30S ribosomal subunits, but not 50S ribosomal subunits or 70S ribosomes.

Its subcellular location is the cytoplasm. One of several proteins that assist in the late maturation steps of the functional core of the 30S ribosomal subunit. Associates with free 30S ribosomal subunits (but not with 30S subunits that are part of 70S ribosomes or polysomes). Required for efficient processing of 16S rRNA. May interact with the 5'-terminal helix region of 16S rRNA. The protein is Ribosome-binding factor A of Burkholderia ambifaria (strain MC40-6).